A 499-amino-acid polypeptide reads, in one-letter code: MMKKFLLVLIPVLILYFYNLGYNAVWMPNESFYADSAKNMLKSGEFLTPVYNGEIRLNKPPMTYWIVSLGYKIFGVNELGLRFFHALLGVFTGVLTYLLARRITGSKNTALLSFLILSLSFIFIANARYASPEVPFTFFITLSLYLWYEYFTRKKEFLFWLALIASSLAVLTKGPAGFVLPAGVVFFYLLLRAPKELLKIKYYAGTLMVFLLSGWWFLYQYLVHREEFLEVFIKENVKRIYALQRDPFYFYALDINVSFLPYSFLFFFALFWALKEKRRELSFPLVWFSFIFLIFSIVKMKIPVYIMPAYPAMAIITADFLNSQSLKKVKNLSLIFLWTVLVLATLALSLYFKFSATLFPLIPLLLLPFFLKKYELLPAFGAFAFLFYLSSVILPYVEQFRPYREVGKEIRKLDPKNELRTYELGFFHHNLPFYADRVIIRRTKEVKKPAIVLARKGSFDCEPVRKWELYTSSESRFFKFMLDIKRKKRFEEFLLCVIK.

11 consecutive transmembrane segments (helical) span residues 5 to 25 (FLLV…YNAV), 79 to 99 (LGLR…TYLL), 110 to 130 (ALLS…ARYA), 132 to 152 (PEVP…EYFT), 170 to 190 (VLTK…FYLL), 203 to 223 (YAGT…QYLV), 252 to 272 (ALDI…ALFW), 286 to 306 (VWFS…PVYI), 332 to 352 (LSLI…SLYF), 354 to 374 (FSAT…LKKY), and 377 to 397 (LPAF…LPYV).

It belongs to the glycosyltransferase 39 family.

It localises to the cell membrane. This is an uncharacterized protein from Aquifex aeolicus (strain VF5).